A 252-amino-acid chain; its full sequence is Indole-3-glycerol phosphate synthase (252 aa).

The protein belongs to the TrpC family.

The catalysed reaction is 1-(2-carboxyphenylamino)-1-deoxy-D-ribulose 5-phosphate + H(+) = (1S,2R)-1-C-(indol-3-yl)glycerol 3-phosphate + CO2 + H2O. It participates in amino-acid biosynthesis; L-tryptophan biosynthesis; L-tryptophan from chorismate: step 4/5. This is Indole-3-glycerol phosphate synthase from Bacillus licheniformis (strain ATCC 14580 / DSM 13 / JCM 2505 / CCUG 7422 / NBRC 12200 / NCIMB 9375 / NCTC 10341 / NRRL NRS-1264 / Gibson 46).